A 483-amino-acid polypeptide reads, in one-letter code: GTPase Der (483 aa).

2 consecutive EngA-type G domains span residues 3 to 167 (FTLA…GEER) and 212 to 387 (LRIA…EIWN). Residues 9–16 (GRPNVGKS), 56–60 (DTAGL), 119–122 (NKAE), 218–225 (GRPNAGKS), 265–269 (DTAGM), and 330–333 (NKWD) each bind GTP. Positions 388 to 472 (RRISTGRLNR…PIRLSLRTSD (85 aa)) constitute a KH-like domain.

Belongs to the TRAFAC class TrmE-Era-EngA-EngB-Septin-like GTPase superfamily. EngA (Der) GTPase family. In terms of assembly, associates with the 50S ribosomal subunit.

Its function is as follows. GTPase that plays an essential role in the late steps of ribosome biogenesis. In Brucella abortus (strain 2308), this protein is GTPase Der.